The primary structure comprises 243 residues: Ribosomal RNA small subunit methyltransferase G (243 aa).

Residues Gly80, Phe85, 132-133 (IE), and Arg151 each bind S-adenosyl-L-methionine.

It belongs to the methyltransferase superfamily. RNA methyltransferase RsmG family.

The protein resides in the cytoplasm. In terms of biological role, specifically methylates the N7 position of a guanine in 16S rRNA. The polypeptide is Ribosomal RNA small subunit methyltransferase G (Synechococcus sp. (strain CC9902)).